The sequence spans 368 residues: uncharacterized protein (368 aa).

Belongs to the ornithine cyclodeaminase/mu-crystallin family.

This is an uncharacterized protein from Dictyostelium discoideum (Social amoeba).